The sequence spans 354 residues: Galactoside alpha-(1,2)-fucosyltransferase 2 (354 aa).

Over 1–22 (MRFAPDYVLCPPTATRRLRATH) the chain is Cytoplasmic. Residues 23-43 (PSVSTIYFLFTIFVVSTVFHC) traverse the membrane as a helical; Signal-anchor for type II membrane protein segment. Over 44 to 354 (HQRLALVPAP…NMGRALWSGL (311 aa)) the chain is Lumenal. Residues asparagine 197, asparagine 291, and asparagine 317 are each glycosylated (N-linked (GlcNAc...) asparagine).

The protein belongs to the glycosyltransferase 11 family. Salivary and lactating mammary glands.

Its subcellular location is the golgi apparatus. It localises to the golgi stack membrane. The enzyme catalyses a beta-D-galactosyl-(1-&gt;3)-N-acetyl-beta-D-glucosaminyl derivative + GDP-beta-L-fucose = an alpha-L-Fuc-(1-&gt;2)-beta-D-Gal-(1-&gt;3)-beta-D-GlcNAc derivative + GDP + H(+). It catalyses the reaction a beta-D-galactosyl-(1-&gt;4)-N-acetyl-beta-D-glucosaminyl derivative + GDP-beta-L-fucose = an alpha-L-Fuc-(1-&gt;2)-beta-D-Gal-(1-&gt;4)-beta-D-GlcNAc derivative + GDP + H(+). The catalysed reaction is a neolactoside nLc4Cer + GDP-beta-L-fucose = a neolactoside IV(2)-alpha-Fuc-nLc4Cer + GDP + H(+). It carries out the reaction a neolactoside nLc4Cer(d18:1(4E)) + GDP-beta-L-fucose = a neolactoside IV(2)-alpha-Fuc-nLc4Cer(d18:1(4E)) + GDP + H(+). The enzyme catalyses a ganglioside GM1 + GDP-beta-L-fucose = a ganglioside Fuc-GM1 + GDP + H(+). It catalyses the reaction a ganglioside GA1 + GDP-beta-L-fucose = a ganglioside Fuc-GA1 + GDP + H(+). The catalysed reaction is Lc4Cer + GDP-beta-L-fucose = alpha-L-fucosyl-(1-&gt;2)-beta-D-galactosyl-(1-&gt;3)-N-acetyl-beta-D-glucosaminyl-(1-&gt;3)-beta-D-galactosyl-(1-&gt;4)-beta-D-glucosyl-(1&lt;-&gt;1')-ceramide + GDP + H(+). It carries out the reaction a beta-D-Gal-(1-&gt;3)-beta-D-GlcNAc-(1-&gt;3)-beta-D-Gal-(1-&gt;4)-beta-D-Glc-(1&lt;-&gt;1')-Cer(d18:1(4E)) + GDP-beta-L-fucose = alpha-L-fucosyl-(1-&gt;2)- beta-D-galactosyl-(1-&gt;3)-N-acetyl-beta-D-glucosaminyl-(1-&gt;3)-beta-D-galactosyl-(1-&gt;4)-beta-D-glucosyl-(1&lt;-&gt;1')-N-acylsphing-4-enine + GDP + H(+). The enzyme catalyses a ganglioside GD1b + GDP-beta-L-fucose = a ganglioside Fuc-GD1b + GDP + H(+). It catalyses the reaction a ganglioside GM1 (d18:1(4E)) + GDP-beta-L-fucose = a ganglioside Fuc-GM1 (d18:1(4E)) + GDP + H(+). The catalysed reaction is a globoside GalGb4Cer (d18:1(4E)) + GDP-beta-L-fucose = a globoside Globo-H (d18:1(4E)) + GDP + H(+). It carries out the reaction a lactoside III(4)-a-Fuc-Lc4Cer + GDP-beta-L-fucose = a lactoside IV(2),III(4)-a-[Fuc]2-Lc4Cer + GDP + H(+). The enzyme catalyses beta-D-galactosyl-(1-&gt;3)-N-acetyl-D-galactosamine + GDP-beta-L-fucose = alpha-L-fucosyl-(1-&gt;2)-beta-D-galactosyl-(1-&gt;3)-N-acetyl-D-galactosamine + GDP + H(+). Its pathway is protein modification; protein glycosylation. Functionally, catalyzes the transfer of L-fucose, from a guanosine diphosphate-beta-L-fucose, to the terminal galactose on both O- and N-linked glycans chains of cell surface glycoproteins and glycolipids and the resulting epitope regulates several processes such as cell-cell interaction including host-microbe interaction, cell surface expression and cell proliferation. Preferentially fucosylates gangliosides GA1 and GM1 in the antrum, cecum and colon and in the female reproductive organs. Fucosylated host glycoproteins or glycolipids mediate interaction with intestinal microbiota influencing its composition. Creates a soluble precursor oligosaccharide FuC-alpha ((1,2)Galbeta-) called the H antigen which is an essential substrate for the final step in the soluble ABO blood group antigen synthesis pathway. The polypeptide is Galactoside alpha-(1,2)-fucosyltransferase 2 (Oryctolagus cuniculus (Rabbit)).